The following is a 296-amino-acid chain: Solute carrier protein FPSE_08119 (296 aa).

3 consecutive transmembrane segments (helical) span residues 12-32 (GLAA…GMVA), 122-142 (AGVG…VILI), and 219-239 (AVAA…FDFV). Solcar repeat units follow at residues 16-102 (LQTA…FEKE), 114-205 (LSFG…AKNQ), and 213-296 (SPPV…GPHS).

The protein belongs to the mitochondrial carrier (TC 2.A.29) family.

Its subcellular location is the mitochondrion inner membrane. Its function is as follows. Solute carrier protein; part of the Fusarium detoxification of benzoxazolinone cluster involved in the degradation of benzoxazolinones produced by the host plant. Maize, wheat, and rye produce the 2 benzoxazinone phytoanticipins 2,4-dihy-droxy-7-methoxy-1,4-benzoxazin-3-one (DIMBOA) and 2,4-dihydroxy-1,4-benzoxazin-3-one (DIBOA) that, due to their inherent instability once released, spontaneously degrade to the more stable corresponding benzoxazolinones, 6-methoxy-2-benzoxazolinone (MBOA) and 2-benzoxazolinone (BOA), respectively. The polypeptide is Solute carrier protein FPSE_08119 (Fusarium pseudograminearum (strain CS3096) (Wheat and barley crown-rot fungus)).